We begin with the raw amino-acid sequence, 184 residues long: Large ribosomal subunit protein uL5c (184 aa).

The protein belongs to the universal ribosomal protein uL5 family. As to quaternary structure, part of the 50S ribosomal subunit; contacts the 5S rRNA.

The protein localises to the plastid. It localises to the chloroplast. In terms of biological role, binds 5S rRNA, forms part of the central protuberance of the 50S subunit. This Zygnema circumcarinatum (Green alga) protein is Large ribosomal subunit protein uL5c (rpl5).